The chain runs to 588 residues: Succinate dehydrogenase flavoprotein subunit (588 aa).

Residues 14–19, 37–52, and aspartate 221 contribute to the FAD site; these read GAGGAG and SKVFPTRSHTVSAQGG. A Tele-8alpha-FAD histidine modification is found at histidine 45. Positions 242 and 254 each coordinate substrate. Catalysis depends on arginine 286, which acts as the Proton acceptor. Residue histidine 354 participates in substrate binding. Residue glutamate 388 participates in FAD binding. Residue arginine 399 participates in substrate binding. Residue 404–405 coordinates FAD; that stretch reads SL.

Belongs to the FAD-dependent oxidoreductase 2 family. FRD/SDH subfamily. In terms of assembly, part of an enzyme complex containing four subunits: a flavoprotein, an iron-sulfur, cytochrome b-556, and a hydrophobic anchor protein. The cofactor is FAD.

It is found in the cell inner membrane. It catalyses the reaction a quinone + succinate = fumarate + a quinol. The protein operates within carbohydrate metabolism; tricarboxylic acid cycle; fumarate from succinate (bacterial route): step 1/1. Its function is as follows. Two distinct, membrane-bound, FAD-containing enzymes are responsible for the catalysis of fumarate and succinate interconversion; the fumarate reductase is used in anaerobic growth, and the succinate dehydrogenase is used in aerobic growth. The protein is Succinate dehydrogenase flavoprotein subunit (sdhA) of Salmonella typhimurium (strain LT2 / SGSC1412 / ATCC 700720).